Reading from the N-terminus, the 1048-residue chain is Calcium-transporting ATPase, endoplasmic reticulum-type (1048 aa).

Residues 1 to 63 lie on the Cytoplasmic side of the membrane; that stretch reads MEEKPFPAWS…WRLVLEQFDD (63 aa). A helical transmembrane segment spans residues 64–84; it reads TLVKILLGAAFISFVLAYVNQ. The Lumenal portion of the chain corresponds to 85–93; it reads DETGESGFE. A helical transmembrane segment spans residues 94-114; sequence AYVEPLVILWILVLNAIVGVW. Over 115–213 the chain is Cytoplasmic; it reads QESNAEKALE…DCELQAKENM (99 aa). The chain crosses the membrane as a helical span at residues 214–234; it reads VFAGTTVVNGSCICIVVNTGM. The Lumenal segment spans residues 235 to 267; the sequence is CTEIGKIQRQIHDASMEESDTPLKKKLDEFGNR. The helical transmembrane segment at 268 to 288 threads the bilayer; it reads LTFAIGVVCLVVWAINYKYFL. Residues 289–312 are Cytoplasmic-facing; it reads SWEVVDDWPSDFRFSFEKCAYYFK. Residues 313 to 333 form a helical membrane-spanning segment; it reads IAVALAVAAIPEGLPSVITTC. Val319, Ala320, Ile322, and Glu324 together coordinate Ca(2+). Residues 334–800 lie on the Lumenal side of the membrane; it reads LALGTRKMAQ…ISSNVGEVIS (467 aa). Asp366 acts as the 4-aspartylphosphate intermediate in catalysis. Positions 728 and 732 each coordinate Mg(2+). 2 residues coordinate Ca(2+): Asn794 and Glu797. The chain crosses the membrane as a helical span at residues 801–821; it reads IFLTAVLGIPECLIPVQLLWV. Positions 822, 825, and 826 each coordinate Ca(2+). The Cytoplasmic segment spans residues 822–862; it reads NLVTDGPPATALGFNPADVDIMQKPPRKNTDALINSWVFFR. A helical membrane pass occupies residues 863-883; it reads YMVIGSYVGIATVGIFIVWYT. The Lumenal portion of the chain corresponds to 884–944; sequence QASFLGINIV…CEYFTVGKVK (61 aa). The helical transmembrane segment at 945 to 965 threads the bilayer; that stretch reads AMTLSLSVLVAIEMFNSLNAL. Ca(2+) is bound at residue Glu957. At 966–981 the chain is on the cytoplasmic side; the sequence is SEDNSLIKMPPWRNPW. A helical membrane pass occupies residues 982-1002; the sequence is LLVAMSLSFALHSVILYVPFL. Residues 1003 to 1007 are Lumenal-facing; that stretch reads ADIFG. Residues 1008 to 1028 traverse the membrane as a helical segment; sequence IVPLSLYEWLLVILLSAPVIL. Residues 1029–1048 lie on the Cytoplasmic side of the membrane; that stretch reads IDEVLKFVGRRRRRTKLKAA.

This sequence belongs to the cation transport ATPase (P-type) (TC 3.A.3) family. Type IIA subfamily. 9-fold higher level in roots compared with leaves.

It is found in the endoplasmic reticulum membrane. It catalyses the reaction Ca(2+)(in) + ATP + H2O = Ca(2+)(out) + ADP + phosphate + H(+). Functionally, this magnesium-dependent enzyme catalyzes the hydrolysis of ATP coupled with the translocation of calcium from the cytosol to an endomembrane compartment. This chain is Calcium-transporting ATPase, endoplasmic reticulum-type, found in Solanum lycopersicum (Tomato).